The following is a 137-amino-acid chain: Large ribosomal subunit protein bL12 (137 aa).

It belongs to the bacterial ribosomal protein bL12 family. As to quaternary structure, homodimer. Part of the ribosomal stalk of the 50S ribosomal subunit. Forms a multimeric L10(L12)X complex, where L10 forms an elongated spine to which 2 to 4 L12 dimers bind in a sequential fashion. Binds GTP-bound translation factors.

In terms of biological role, forms part of the ribosomal stalk which helps the ribosome interact with GTP-bound translation factors. Is thus essential for accurate translation. The polypeptide is Large ribosomal subunit protein bL12 (Synechococcus sp. (strain JA-3-3Ab) (Cyanobacteria bacterium Yellowstone A-Prime)).